A 77-amino-acid polypeptide reads, in one-letter code: Acyl carrier protein (77 aa).

Positions 2 to 77 (SDVADRVKKI…DAVKFISEAS (76 aa)) constitute a Carrier domain. An O-(pantetheine 4'-phosphoryl)serine modification is found at Ser37.

Belongs to the acyl carrier protein (ACP) family. Post-translationally, 4'-phosphopantetheine is transferred from CoA to a specific serine of apo-ACP by AcpS. This modification is essential for activity because fatty acids are bound in thioester linkage to the sulfhydryl of the prosthetic group.

The protein localises to the cytoplasm. It functions in the pathway lipid metabolism; fatty acid biosynthesis. Its function is as follows. Carrier of the growing fatty acid chain in fatty acid biosynthesis. This chain is Acyl carrier protein, found in Ruegeria sp. (strain TM1040) (Silicibacter sp.).